The chain runs to 303 residues: Probable 5-dehydro-4-deoxyglucarate dehydratase (303 aa).

Belongs to the DapA family.

It catalyses the reaction 5-dehydro-4-deoxy-D-glucarate + H(+) = 2,5-dioxopentanoate + CO2 + H2O. It participates in carbohydrate acid metabolism; D-glucarate degradation; 2,5-dioxopentanoate from D-glucarate: step 2/2. The sequence is that of Probable 5-dehydro-4-deoxyglucarate dehydratase from Acidovorax ebreus (strain TPSY) (Diaphorobacter sp. (strain TPSY)).